The primary structure comprises 518 residues: Ribonuclease Y (518 aa).

Residues 2–22 traverse the membrane as a helical segment; that stretch reads VLNILLAIVGLIVGLGLGFVI. Positions 91–119 are disordered; it reads QREQTLDRKDDSLEKREGSLEEKEEKLGA. One can recognise a KH domain in the interval 208–268; that stretch reads TVSVVTLPND…IRREIARMTL (61 aa). In terms of domain architecture, HD spans 334-427; it reads VLNHSIEVAK…VAAADALSAA (94 aa).

This sequence belongs to the RNase Y family.

It localises to the cell membrane. In terms of biological role, endoribonuclease that initiates mRNA decay. In Enterococcus faecalis (strain ATCC 700802 / V583), this protein is Ribonuclease Y.